Here is a 524-residue protein sequence, read N- to C-terminus: Nif-specific regulatory protein (524 aa).

Residues 1–182 (MIHKSDSDTT…AQTIRLMILP (182 aa)) form an a domain region. In terms of domain architecture, GAF spans 35–176 (EASKTLQEVL…TVANLIAQTI (142 aa)). Residues 212 to 481 (MVGKSPAMRQ…DGWLDNSLDE (270 aa)) form the Sigma-54 factor interaction domain. ATP is bound by residues 240–247 (GESGTGKE) and 303–312 (ADGGTLFLDE). A C-terminal DNA-binding domain region spans residues 482-524 (RQRLIAALEKAGWVQAKAARLLGMTPRQVAYRIQIMDITMPRL). The segment at residues 496–515 (QAKAARLLGMTPRQVAYRIQ) is a DNA-binding region (H-T-H motif).

Interacts with sigma-54.

In terms of biological role, required for activation of most nif operons, which are directly involved in nitrogen fixation. The protein is Nif-specific regulatory protein (nifA) of Klebsiella oxytoca.